A 120-amino-acid chain; its full sequence is U13-lycotoxin-Ls1a (120 aa).

Residues 1 to 16 (MKILFVLISILYAVYC) form the signal peptide. A propeptide spanning residues 17 to 54 (FSSEEDVDSAYLANELEPVEDINSEQYAALEPKEEQER) is cleaved from the precursor. Cystine bridges form between cysteine 56–cysteine 70, cysteine 63–cysteine 76, cysteine 69–cysteine 87, and cysteine 78–cysteine 85. An Agouti domain is found at 56–95 (CADMGQDCKDDCDCCLNIATCNCWFGRYFCSCTFGDYQTC).

Belongs to the neurotoxin 05 (agouti) family. In terms of processing, contains 6 disulfide bonds. In terms of tissue distribution, expressed by the venom gland.

The protein localises to the secreted. This is U13-lycotoxin-Ls1a from Lycosa singoriensis (Wolf spider).